The sequence spans 296 residues: MSIFIDRETKVCVQGITGSEGSFWTKHMIDLGTDVICGVTPGKEGQMVEGIPVYHSVKNALKHHKIDATMLFVPPKMTKDAVFEALEAGIKKIVTIADGIPLHEMMEIRQRALEENAFVVGGNTSGVISPKEAMMGSFPHWIERVYKKGSIGVMTRSGSLTNEVTAMIVEAGYGVSSLIGVGGDPVPGARFAEFLPLYQKDPETKAVVIIGELGGTMEEEVAETILKGTFTKPLVAFLGGRTAPKGQKMGHAGAIITGGKGSVQNKIEMLEKAGAKVADRPRKVGKLLEELGVTKD.

Residues 17–20 (TGSE), lysine 43, and 96–98 (IAD) each bind CoA. Catalysis depends on histidine 251, which acts as the Tele-phosphohistidine intermediate.

Belongs to the succinate/malate CoA ligase alpha subunit family. In terms of assembly, forms a complex with SqwK.

It carries out the reaction sulfoacetate + ATP + CoA = sulfoacetyl-CoA + ADP + phosphate. Functionally, part of a variant of the sulfo-TK pathway, a D-sulfoquinovose degradation pathway that produces sulfoacetate. Hydrolyzes sulfoacetyl-coenzyme A (sulfoacetyl-CoA) to produce sulfoacetate and CoA coupled with the phosphorylation of ADP to generate ATP. Cannot use succinate, acetate or 3-hydroxypropionate, and shows only residual activities with malonate and 3-sulfopropanoate. In Acholeplasma sp, this protein is ADP-forming sulfoacetate-CoA ligase subunit SqwL.